We begin with the raw amino-acid sequence, 250 residues long: 3-deoxy-manno-octulosonate cytidylyltransferase (250 aa).

This sequence belongs to the KdsB family.

The protein resides in the cytoplasm. It carries out the reaction 3-deoxy-alpha-D-manno-oct-2-ulosonate + CTP = CMP-3-deoxy-beta-D-manno-octulosonate + diphosphate. Its pathway is nucleotide-sugar biosynthesis; CMP-3-deoxy-D-manno-octulosonate biosynthesis; CMP-3-deoxy-D-manno-octulosonate from 3-deoxy-D-manno-octulosonate and CTP: step 1/1. It functions in the pathway bacterial outer membrane biogenesis; lipopolysaccharide biosynthesis. Functionally, activates KDO (a required 8-carbon sugar) for incorporation into bacterial lipopolysaccharide in Gram-negative bacteria. This chain is 3-deoxy-manno-octulosonate cytidylyltransferase, found in Pectobacterium atrosepticum (strain SCRI 1043 / ATCC BAA-672) (Erwinia carotovora subsp. atroseptica).